The primary structure comprises 436 residues: Anaerobic glycerol-3-phosphate dehydrogenase subunit B (436 aa).

The protein belongs to the anaerobic G-3-P dehydrogenase subunit B family. Composed of a catalytic GlpA/B dimer and of membrane bound GlpC. FMN serves as cofactor.

The enzyme catalyses a quinone + sn-glycerol 3-phosphate = dihydroxyacetone phosphate + a quinol. It functions in the pathway polyol metabolism; glycerol degradation via glycerol kinase pathway; glycerone phosphate from sn-glycerol 3-phosphate (anaerobic route): step 1/1. Conversion of glycerol 3-phosphate to dihydroxyacetone. Uses fumarate or nitrate as electron acceptor. The protein is Anaerobic glycerol-3-phosphate dehydrogenase subunit B of Vibrio cholerae serotype O1 (strain M66-2).